Consider the following 187-residue polypeptide: Large ribosomal subunit protein uL10 (187 aa).

Belongs to the universal ribosomal protein uL10 family. Part of the ribosomal stalk of the 50S ribosomal subunit. The N-terminus interacts with L11 and the large rRNA to form the base of the stalk. The C-terminus forms an elongated spine to which L12 dimers bind in a sequential fashion forming a multimeric L10(L12)X complex.

Its function is as follows. Forms part of the ribosomal stalk, playing a central role in the interaction of the ribosome with GTP-bound translation factors. The chain is Large ribosomal subunit protein uL10 from Roseiflexus castenholzii (strain DSM 13941 / HLO8).